We begin with the raw amino-acid sequence, 73 residues long: Beta-1 adrenergic receptor (73 aa).

Residues 1-12 (ISALVSFLPILM) form a helical membrane-spanning segment. Residues 13–38 (HWWRAENDEARRCYNDPKCCDFVTNR) are Extracellular-facing. An intrachain disulfide couples Cys-25 to Cys-31. A helical transmembrane segment spans residues 39–64 (AYAIASSVVSFYVPLCIMAFVYLRVF). Ser-44 provides a ligand contact to cyanopindolol. Residues 65–73 (REAQKQVKK) lie on the Cytoplasmic side of the membrane.

This sequence belongs to the G-protein coupled receptor 1 family. Adrenergic receptor subfamily. ADRB1 sub-subfamily. As to quaternary structure, interacts (via C-terminus PDZ motif) with RAPGEF2; the interaction is direct. Interacts with GOPC, MAGI3 and DLG4. In terms of processing, homologous desensitization of the receptor is mediated by its phosphorylation by beta-adrenergic receptor kinase.

It localises to the cell membrane. It is found in the early endosome. Its function is as follows. Beta-adrenergic receptors mediate the catecholamine-induced activation of adenylate cyclase through the action of G proteins. This receptor binds epinephrine and norepinephrine with approximately equal affinity. Mediates Ras activation through G(s)-alpha- and cAMP-mediated signaling. In dorsal pons neurons, involved in the regulation of sleep/wake behaviors. The polypeptide is Beta-1 adrenergic receptor (ADRB1) (Meriones unguiculatus (Mongolian jird)).